Consider the following 303-residue polypeptide: Glutamyl-Q tRNA(Asp) synthetase (303 aa).

L-glutamate contacts are provided by residues 16 to 20 (RFAPS) and glutamate 52. The short motif at 19-29 (PSPSGPLHFGS) is the 'HIGH' region element. Residues cysteine 108, cysteine 110, tyrosine 122, and cysteine 126 each contribute to the Zn(2+) site. Positions 177 and 195 each coordinate L-glutamate. Residues 233 to 237 (KLSKQ) carry the 'KMSKS' region motif. Residue lysine 236 coordinates ATP.

This sequence belongs to the class-I aminoacyl-tRNA synthetase family. GluQ subfamily. It depends on Zn(2+) as a cofactor.

Catalyzes the tRNA-independent activation of glutamate in presence of ATP and the subsequent transfer of glutamate onto a tRNA(Asp). Glutamate is transferred on the 2-amino-5-(4,5-dihydroxy-2-cyclopenten-1-yl) moiety of the queuosine in the wobble position of the QUC anticodon. The polypeptide is Glutamyl-Q tRNA(Asp) synthetase (Vibrio vulnificus (strain YJ016)).